Here is a 210-residue protein sequence, read N- to C-terminus: MAGPGPGDQDEHYDFLFKLVLVGDASVGKTCVVQRFKTGAFSARQGSTIGVDFTMKTLEIQGKRVKLQIWDTAGQERFRTITQSYYRSANGAILAYDISKRSTFLSVPHWIEDVRKYAGSNIVQLLIGNKSDLADLREVPLAEAQSLAEHYDILCAIETSAKDSSNVEEAFTRVATELIMRHGGPMFSEKNTDHIQLDSKDIAESWGCGC.

GTP is bound at residue 23 to 30 (GDASVGKT). The Effector region signature appears at 45 to 53 (QGSTIGVDF). The residue at position 47 (Ser47) is a Phosphoserine. 71–75 (DTAGQ) is a GTP binding site. Thr80 bears the Phosphothreonine mark. GTP-binding positions include 129–132 (NKSD) and 161–162 (AK). Residues Cys208 and Cys210 are each lipidated (S-geranylgeranyl cysteine). A Cysteine methyl ester modification is found at Cys210.

This sequence belongs to the small GTPase superfamily. Rab family. As to quaternary structure, interacts with GDI1, GDI2 and CHM; phosphorylation at Thr-80 disrupts these interactions.

Its subcellular location is the cytoplasmic vesicle. The protein resides in the phagosome. The protein localises to the phagosome membrane. It localises to the golgi apparatus. It is found in the trans-Golgi network membrane. Its subcellular location is the trans-Golgi network. In terms of biological role, the small GTPases Rab are key regulators of intracellular membrane trafficking, from the formation of transport vesicles to their fusion with membranes. Rabs cycle between an inactive GDP-bound form and an active GTP-bound form that is able to recruit to membranes different set of downstream effectors directly responsible for vesicle formation, movement, tethering and fusion. The low intrinsic GTPase activity of RAB43 is activated by USP6NL. Involved in retrograde transport from the endocytic pathway to the Golgi apparatus. Involved in the transport of Shiga toxin from early and recycling endosomes to the trans-Golgi network. Required for the structural integrity of the Golgi complex. Plays a role in the maturation of phagosomes that engulf pathogens, such as S.aureus and Mycobacterium. The chain is Ras-related protein Rab-43 (Rab43) from Rattus norvegicus (Rat).